The sequence spans 497 residues: Probable malate:quinone oxidoreductase (497 aa).

Belongs to the MQO family. Requires FAD as cofactor.

The catalysed reaction is (S)-malate + a quinone = a quinol + oxaloacetate. It functions in the pathway carbohydrate metabolism; tricarboxylic acid cycle; oxaloacetate from (S)-malate (quinone route): step 1/1. The polypeptide is Probable malate:quinone oxidoreductase (Bacillus cereus (strain ATCC 14579 / DSM 31 / CCUG 7414 / JCM 2152 / NBRC 15305 / NCIMB 9373 / NCTC 2599 / NRRL B-3711)).